Here is a 681-residue protein sequence, read N- to C-terminus: DNA-directed RNA polymerase subunit beta' (681 aa).

Residues Cys-69, Cys-71, Cys-87, and Cys-90 each coordinate Zn(2+). The Mg(2+) site is built by Asp-489, Asp-491, and Asp-493.

Belongs to the RNA polymerase beta' chain family. RpoC1 subfamily. As to quaternary structure, in plastids the minimal PEP RNA polymerase catalytic core is composed of four subunits: alpha, beta, beta', and beta''. When a (nuclear-encoded) sigma factor is associated with the core the holoenzyme is formed, which can initiate transcription. Mg(2+) is required as a cofactor. Zn(2+) serves as cofactor.

It localises to the plastid. The protein localises to the chloroplast. It catalyses the reaction RNA(n) + a ribonucleoside 5'-triphosphate = RNA(n+1) + diphosphate. DNA-dependent RNA polymerase catalyzes the transcription of DNA into RNA using the four ribonucleoside triphosphates as substrates. In Anthoceros angustus (Hornwort), this protein is DNA-directed RNA polymerase subunit beta'.